The following is a 365-amino-acid chain: 2-aminoethylphosphonate--pyruvate transaminase (365 aa).

Residue Lys194 is modified to N6-(pyridoxal phosphate)lysine.

Belongs to the class-V pyridoxal-phosphate-dependent aminotransferase family. PhnW subfamily. Homodimer. Pyridoxal 5'-phosphate serves as cofactor.

It catalyses the reaction (2-aminoethyl)phosphonate + pyruvate = phosphonoacetaldehyde + L-alanine. Functionally, involved in phosphonate degradation. This Bacillus cytotoxicus (strain DSM 22905 / CIP 110041 / 391-98 / NVH 391-98) protein is 2-aminoethylphosphonate--pyruvate transaminase.